The chain runs to 188 residues: Scytalone dehydratase (188 aa).

Tyr27, Tyr47, and Phe50 together coordinate substrate. Residues His82 and His107 contribute to the active site. Asn128 serves as a coordination point for substrate.

This sequence belongs to the scytalone dehydratase family. Homotrimer. Each subunit contains an active site, located in the central part of the hydrophobic core of the monomer, which functions independently.

It localises to the endosome. It carries out the reaction scytalone = 1,3,8-trihydroxynaphthalene + H2O. It functions in the pathway pigment biosynthesis; melanin biosynthesis. Its activity is regulated as follows. Carpropamid acts as an efficient inhibitor of scytalone dehydratase activity. Scytalone dehydratase; part of the gene cluster that mediates the biosynthesis of dihydroxynaphthalene (DHN)-melanin, a bluish-green pigment and a structural component of the conidial wall. Within the pathway, catalyzes the dehydration of scytalone as well as of vermelone. This is Scytalone dehydratase from Colletotrichum orbiculare (strain 104-T / ATCC 96160 / CBS 514.97 / LARS 414 / MAFF 240422) (Cucumber anthracnose fungus).